Reading from the N-terminus, the 233-residue chain is 2-C-methyl-D-erythritol 4-phosphate cytidylyltransferase (233 aa).

The protein belongs to the IspD/TarI cytidylyltransferase family. IspD subfamily.

The catalysed reaction is 2-C-methyl-D-erythritol 4-phosphate + CTP + H(+) = 4-CDP-2-C-methyl-D-erythritol + diphosphate. The protein operates within isoprenoid biosynthesis; isopentenyl diphosphate biosynthesis via DXP pathway; isopentenyl diphosphate from 1-deoxy-D-xylulose 5-phosphate: step 2/6. Functionally, catalyzes the formation of 4-diphosphocytidyl-2-C-methyl-D-erythritol from CTP and 2-C-methyl-D-erythritol 4-phosphate (MEP). In Aromatoleum aromaticum (strain DSM 19018 / LMG 30748 / EbN1) (Azoarcus sp. (strain EbN1)), this protein is 2-C-methyl-D-erythritol 4-phosphate cytidylyltransferase.